A 245-amino-acid chain; its full sequence is Heat shock transcription factor (245 aa).

The DNA-binding element occupies 17–115; it reads KSGFVNRLYR…LISLITRDKS (99 aa). The segment at 130 to 169 is involved in trimerization; the sequence is SLQYLASCNYKQQKEINDLKDRIKTLETKYATLYEIISNA.

The protein belongs to the HSF family. As to quaternary structure, homotrimer. Homotrimerization increases the affinity of HSF1 to DNA.

It localises to the nucleus. DNA-binding transcription factor that specifically binds heat shock promoter elements (HSE) and activates transcription. This Enterocytozoon bieneusi (strain H348) (Microsporidian parasite) protein is Heat shock transcription factor.